Here is a 128-residue protein sequence, read N- to C-terminus: Putative pre-16S rRNA nuclease (128 aa).

It belongs to the YqgF nuclease family.

Its subcellular location is the cytoplasm. In terms of biological role, could be a nuclease involved in processing of the 5'-end of pre-16S rRNA. The chain is Putative pre-16S rRNA nuclease from Sulfurovum sp. (strain NBC37-1).